Here is a 408-residue protein sequence, read N- to C-terminus: Argininosuccinate synthase (408 aa).

ATP-binding positions include 10 to 18 (AYSGGLDTS) and alanine 37. L-citrulline-binding residues include tyrosine 90 and serine 95. Glycine 120 contributes to the ATP binding site. 3 residues coordinate L-aspartate: threonine 122, asparagine 126, and aspartate 127. Asparagine 126 provides a ligand contact to L-citrulline. Positions 130, 181, 190, 266, and 278 each coordinate L-citrulline.

This sequence belongs to the argininosuccinate synthase family. Type 1 subfamily. Homotetramer.

It is found in the cytoplasm. It carries out the reaction L-citrulline + L-aspartate + ATP = 2-(N(omega)-L-arginino)succinate + AMP + diphosphate + H(+). It participates in amino-acid biosynthesis; L-arginine biosynthesis; L-arginine from L-ornithine and carbamoyl phosphate: step 2/3. The sequence is that of Argininosuccinate synthase from Chromobacterium violaceum (strain ATCC 12472 / DSM 30191 / JCM 1249 / CCUG 213 / NBRC 12614 / NCIMB 9131 / NCTC 9757 / MK).